Here is a 258-residue protein sequence, read N- to C-terminus: 1-(5-phosphoribosyl)-5-[(5-phosphoribosylamino)methylideneamino] imidazole-4-carboxamide isomerase (258 aa).

The active-site Proton acceptor is D9. Catalysis depends on D131, which acts as the Proton donor.

This sequence belongs to the HisA/HisF family.

The protein resides in the cytoplasm. It catalyses the reaction 1-(5-phospho-beta-D-ribosyl)-5-[(5-phospho-beta-D-ribosylamino)methylideneamino]imidazole-4-carboxamide = 5-[(5-phospho-1-deoxy-D-ribulos-1-ylimino)methylamino]-1-(5-phospho-beta-D-ribosyl)imidazole-4-carboxamide. It functions in the pathway amino-acid biosynthesis; L-histidine biosynthesis; L-histidine from 5-phospho-alpha-D-ribose 1-diphosphate: step 4/9. The chain is 1-(5-phosphoribosyl)-5-[(5-phosphoribosylamino)methylideneamino] imidazole-4-carboxamide isomerase from Salinibacter ruber (strain DSM 13855 / M31).